The chain runs to 503 residues: Transforming protein rel polyprotein (503 aa).

In terms of domain architecture, RHD spans Pro-16–Thr-305. Ser-275 bears the Phosphoserine; by host PKA mark. 2 disordered regions span residues Arg-286–Leu-306 and Ala-318–Asn-342. The Nuclear localization signal motif lies at Lys-298 to Arg-303.

It localises to the host cytoplasm. Its function is as follows. This transforming protein appears to have a protein-kinase activity. The chain is Transforming protein rel polyprotein (V-REL) from Galliformes.